Consider the following 1066-residue polypeptide: Elongation factor 3 (1066 aa).

HEAT repeat units follow at residues 112 to 149, 151 to 188, 192 to 229, 231 to 268, 269 to 306, and 312 to 353; these read FIFENVLNSLVEAMGDKEKAVQKASLETLKAFVRVMSP, AAQQVLKVVLHQARTAGKWQVKTGCVALLEEMVTACPE, ALMPEIIPVMTEVIWDTKTDVQKASRAALTKLCALISN, DIERFIPALINSLIHPVEEVPKTIQLLSATTFVQEVDS, ATLALMVPLLSRGLNERPTATKRKVAVIIDNMTKLVDN, and PFLG…VTGD. Thr-418 contributes to the ADP binding site. 2 ABC transporter domains span residues 454–672 and 699–1015; these read EEGE…YAEL and IKMK…KKEE. ADP is bound by residues Asn-735, Glu-944, Asn-947, and His-973. A disordered region spans residues 997-1066; it reads GHDWTESNSK…YDSADELEDL (70 aa). Residues 1042–1054 are compositionally biased toward basic residues; the sequence is RKAKKDRMARKKA.

Belongs to the ABC transporter superfamily. ABCF family. EF3 subfamily.

The protein resides in the cytoplasm. The protein localises to the cytosol. The catalysed reaction is ATP + H2O = ADP + phosphate + H(+). The protein operates within protein biosynthesis; polypeptide chain elongation. Functionally, ribosome-dependent ATPase that functions in cytoplasmic translation elongation. Required for the ATP-dependent release of deacylated tRNA from the ribosomal E-site during protein biosynthesis. Stimulates the eEF1A-dependent binding of aminoacyl-tRNA to the ribosomal A-site, which has reduced affinity for tRNA as long as the E-site is occupied. Assists translation termination by stimulating the release of nascent protein from the ribosome by release factors. In Mycosarcoma maydis (Corn smut fungus), this protein is Elongation factor 3.